An 859-amino-acid polypeptide reads, in one-letter code: Active breakpoint cluster region-related protein (859 aa).

The segment at 31-84 is disordered; that stretch reads AEGHEEQKGPPEGSETMPYIDESPTMSPQLSARSQGGGESISPTPPEGLAPGVE. Polar residues predominate over residues 54-64; the sequence is PTMSPQLSARS. Serine 57 is subject to Phosphoserine. Residues 91 to 284 form the DH domain; sequence MRKLVLSGFL…QNFLSSINED (194 aa). In terms of domain architecture, PH spans 301 to 459; it reads QLVKDGFLVE…WREAIQKLQK (159 aa). In terms of domain architecture, C2 spans 484 to 613; sequence TVHNIPVTSN…ESKNWHTDVI (130 aa). In terms of domain architecture, Rho-GAP spans 647–845; it reads VKISVVTKRE…YYLQHPPISF (199 aa).

In terms of assembly, interacts with DLG4. In terms of tissue distribution, expressed in brain, including the cortex, hippocampus, cerebellum, and brainstem, as well as the spinal cord (at protein level).

The protein resides in the cell projection. It is found in the dendritic spine. The protein localises to the axon. It localises to the synapse. Its function is as follows. Protein with a unique structure having two opposing regulatory activities toward small GTP-binding proteins. The C-terminus is a GTPase-activating protein domain which stimulates GTP hydrolysis by RAC1, RAC2 and CDC42. Accelerates the intrinsic rate of GTP hydrolysis of RAC1 or CDC42, leading to down-regulation of the active GTP-bound form. The central Dbl homology (DH) domain functions as guanine nucleotide exchange factor (GEF) that modulates the GTPases CDC42, RHOA and RAC1. Promotes the conversion of CDC42, RHOA and RAC1 from the GDP-bound to the GTP-bound form. Functions as an important negative regulator of neuronal RAC1 activity. Regulates macrophage functions such as CSF-1 directed motility and phagocytosis through the modulation of RAC1 activity. The chain is Active breakpoint cluster region-related protein from Rattus norvegicus (Rat).